Consider the following 1167-residue polypeptide: PH and Rap-GAP domain-containing protein DDB_G0271806 (1167 aa).

2 PH domains span residues 35 to 140 (NCVK…SSSL) and 165 to 257 (HVYL…SRIP). The disordered stretch occupies residues 95–160 (GIDNNNCTNS…TNANTNNGLS (66 aa)). Over residues 98-155 (NNNCTNSNSNNNNNNSDLIHLSAPSLSSSTSSTISPISSSSSLTTTTTTTTTTTNANT) the composition is skewed to low complexity. Disordered stretches follow at residues 335 to 361 (SGGGSNNSSPSSLQSQQAKESGNGGSL), 376 to 400 (WRFSSSPSQGRVSIGGGGDRSSTQV), and 645 to 734 (YSRS…LEPE). A compositionally biased stretch (low complexity) spans 340–351 (NNSSPSSLQSQQ). Positions 648–676 (SEPNLQSCLSSSPSTRETMVPSSPSSHQL) are enriched in polar residues. Residues 687–732 (EQQLSSSSSSSSQQLQLQLQQQEQEQLLQEQPEAEQSQPEPQPQLE) show a composition bias toward low complexity. The 213-residue stretch at 950 to 1162 (LLSFEERQTT…RTRESLLNYY (213 aa)) folds into the Rap-GAP domain.

In Dictyostelium discoideum (Social amoeba), this protein is PH and Rap-GAP domain-containing protein DDB_G0271806.